We begin with the raw amino-acid sequence, 213 residues long: Adenylate kinase (213 aa).

Residue 10-15 participates in ATP binding; that stretch reads GCGKGT. The segment at 30 to 59 is NMP; it reads STGDLMRKEISLNTTLGLKCQEYMNAGKYV. AMP contacts are provided by residues T31, R36, 57–59, 83–86, and Q90; these read KYV and GYPR. Residues 124-161 are LID; sequence NRLVCPLCKASFNLETRKPKQEGLCDFDNTKLVKRSDD. Residue R125 coordinates ATP. The Zn(2+) site is built by C128 and C131. An ATP-binding site is contributed by 134-135; that stretch reads SF. Zn(2+) is bound by residues C148 and D151. AMP contacts are provided by R158 and R169. N197 is a binding site for ATP.

This sequence belongs to the adenylate kinase family. As to quaternary structure, monomer.

It localises to the cytoplasm. It catalyses the reaction AMP + ATP = 2 ADP. Its pathway is purine metabolism; AMP biosynthesis via salvage pathway; AMP from ADP: step 1/1. Catalyzes the reversible transfer of the terminal phosphate group between ATP and AMP. Plays an important role in cellular energy homeostasis and in adenine nucleotide metabolism. The protein is Adenylate kinase of Mycoplasma capricolum subsp. capricolum (strain California kid / ATCC 27343 / NCTC 10154).